A 340-amino-acid polypeptide reads, in one-letter code: Glyceraldehyde-3-phosphate dehydrogenase (340 aa).

NAD(+) is bound by residues 11–12 (SI) and Gly-111. Residue 140 to 142 (SCN) participates in D-glyceraldehyde 3-phosphate binding. Cys-141 functions as the Nucleophile in the catalytic mechanism. Arg-169 contributes to the NAD(+) binding site. D-glyceraldehyde 3-phosphate is bound at residue 195-196 (HG). Residue Gln-303 participates in NAD(+) binding.

The protein belongs to the glyceraldehyde-3-phosphate dehydrogenase family. Homotetramer.

It localises to the cytoplasm. The catalysed reaction is D-glyceraldehyde 3-phosphate + phosphate + NADP(+) = (2R)-3-phospho-glyceroyl phosphate + NADPH + H(+). It catalyses the reaction D-glyceraldehyde 3-phosphate + phosphate + NAD(+) = (2R)-3-phospho-glyceroyl phosphate + NADH + H(+). The protein operates within carbohydrate degradation; glycolysis; pyruvate from D-glyceraldehyde 3-phosphate: step 1/5. This is Glyceraldehyde-3-phosphate dehydrogenase from Methanococcus maripaludis (strain C5 / ATCC BAA-1333).